Consider the following 100-residue polypeptide: Replication restart protein PriB (100 aa).

The SSB domain occupies 1–99 (MGFNNLVSLA…LRIQNIKEYK (99 aa)).

This sequence belongs to the PriB family. In terms of assembly, homodimer. Interacts with PriA and DnaT. Component of the replication restart primosome. Primosome assembly occurs via a 'hand-off' mechanism. PriA binds to replication forks, subsequently PriB then DnaT bind; DnaT then displaces ssDNA to generate the helicase loading substrate.

In terms of biological role, involved in the restart of stalled replication forks, which reloads the replicative helicase on sites other than the origin of replication; the PriA-PriB pathway is the major replication restart pathway. During primosome assembly it facilitates complex formation between PriA and DnaT on DNA; stabilizes PriA on DNA. Stimulates the DNA unwinding activity of PriA helicase. The protein is Replication restart protein PriB of Neisseria meningitidis serogroup C (strain 053442).